Here is a 160-residue protein sequence, read N- to C-terminus: Glyoxalase domain-containing protein 5 (160 aa).

The VOC domain maps to 37–157; it reads RLDHIVMTVK…DRNLIEVSNY (121 aa).

The protein belongs to the glyoxalase I family.

The protein is Glyoxalase domain-containing protein 5 (GLOD5) of Homo sapiens (Human).